A 197-amino-acid chain; its full sequence is Holliday junction branch migration complex subunit RuvA (197 aa).

Residues 1–64 (MYEYIKGKYI…EDFIGVYGFL (64 aa)) form a domain I region. Residues 65 to 143 (TKDELSMFKL…IDILEEDDEQ (79 aa)) are domain II. The segment at 144-148 (TINKV) is flexible linker. A domain III region spans residues 149–197 (TDDKKVLEAVAALITLGYSEKEANKVINSCDKNNSLEQIIKEALKYLMK).

Belongs to the RuvA family. Homotetramer. Forms an RuvA(8)-RuvB(12)-Holliday junction (HJ) complex. HJ DNA is sandwiched between 2 RuvA tetramers; dsDNA enters through RuvA and exits via RuvB. An RuvB hexamer assembles on each DNA strand where it exits the tetramer. Each RuvB hexamer is contacted by two RuvA subunits (via domain III) on 2 adjacent RuvB subunits; this complex drives branch migration. In the full resolvosome a probable DNA-RuvA(4)-RuvB(12)-RuvC(2) complex forms which resolves the HJ.

The protein localises to the cytoplasm. In terms of biological role, the RuvA-RuvB-RuvC complex processes Holliday junction (HJ) DNA during genetic recombination and DNA repair, while the RuvA-RuvB complex plays an important role in the rescue of blocked DNA replication forks via replication fork reversal (RFR). RuvA specifically binds to HJ cruciform DNA, conferring on it an open structure. The RuvB hexamer acts as an ATP-dependent pump, pulling dsDNA into and through the RuvAB complex. HJ branch migration allows RuvC to scan DNA until it finds its consensus sequence, where it cleaves and resolves the cruciform DNA. This chain is Holliday junction branch migration complex subunit RuvA, found in Clostridium botulinum (strain 657 / Type Ba4).